The sequence spans 243 residues: UPF0246 protein M28_Spy1772 (243 aa).

It belongs to the UPF0246 family.

This is UPF0246 protein M28_Spy1772 from Streptococcus pyogenes serotype M28 (strain MGAS6180).